Consider the following 191-residue polypeptide: MKPAKEIRVGNIIMVDSKPMIVLRSDVNGSSRTGFTYKWKMKNLLTNTPMENVFRGDDKFDVVVLDKKPVTYSYFADPLYVFMDEEYNQYEIEEENLGDALHYLKDGMECEAVFYDGKAISVELPITIARQVVYSEPAVKGNTSGNVLKEAKIENAVEAHRHTVQVPLFVSQDDVIEIDTRTNEYKRVVRN.

Belongs to the elongation factor P family.

It localises to the cytoplasm. Its pathway is protein biosynthesis; polypeptide chain elongation. Functionally, involved in peptide bond synthesis. Stimulates efficient translation and peptide-bond synthesis on native or reconstituted 70S ribosomes in vitro. Probably functions indirectly by altering the affinity of the ribosome for aminoacyl-tRNA, thus increasing their reactivity as acceptors for peptidyl transferase. The chain is Elongation factor P from Janthinobacterium sp. (strain Marseille) (Minibacterium massiliensis).